A 256-amino-acid polypeptide reads, in one-letter code: Small ribosomal subunit protein uS2 (256 aa).

Belongs to the universal ribosomal protein uS2 family.

The chain is Small ribosomal subunit protein uS2 from Streptococcus agalactiae serotype Ia (strain ATCC 27591 / A909 / CDC SS700).